We begin with the raw amino-acid sequence, 119 residues long: Ribosome-binding factor A (119 aa).

The protein belongs to the RbfA family. As to quaternary structure, monomer. Binds 30S ribosomal subunits, but not 50S ribosomal subunits or 70S ribosomes.

It is found in the cytoplasm. One of several proteins that assist in the late maturation steps of the functional core of the 30S ribosomal subunit. Associates with free 30S ribosomal subunits (but not with 30S subunits that are part of 70S ribosomes or polysomes). Required for efficient processing of 16S rRNA. May interact with the 5'-terminal helix region of 16S rRNA. The polypeptide is Ribosome-binding factor A (Buchnera aphidicola subsp. Baizongia pistaciae (strain Bp)).